The sequence spans 57 residues: Preprotein translocase subunit SecG (57 aa).

Residues 1 to 33 (MARRRRYEGLNPFVAAGLIKFSEEGELERIKLT) are Cytoplasmic-facing. A helical membrane pass occupies residues 34–55 (PKSAVVISVALIAAILVLNLIH). Residues 56 to 57 (PL) lie on the Extracellular side of the membrane.

This sequence belongs to the SEC61-beta family. Component of the protein translocase complex. Heterotrimer consisting of alpha (SecY), beta (SecG) and gamma (SecE) subunits. Can form oligomers of the heterotrimer.

Its subcellular location is the cell membrane. Functionally, involved in protein export. The function of the beta subunit is unknown, but it may be involved in stabilization of the trimeric complex. This Pyrobaculum neutrophilum (strain DSM 2338 / JCM 9278 / NBRC 100436 / V24Sta) (Thermoproteus neutrophilus) protein is Preprotein translocase subunit SecG.